The chain runs to 1708 residues: Rapamycin-insensitive companion of mTOR (1708 aa).

Residues 1–789 (MAAIGRGRSL…DKANLHALIQ (789 aa)) are interaction with NBN. Residues S21, S35, and S265 each carry the phosphoserine modification. K274 participates in a covalent cross-link: Glycyl lysine isopeptide (Lys-Gly) (interchain with G-Cter in ubiquitin). Residues 521 to 570 (LKDTEEALLINLRDSQVLQHKENLDWDWNLIGTILKWPNVNLRNYKDEQL) form a ribosome-binding domain region. The ATP site is built by N543, R572, and R576. Low complexity predominate over residues 1021–1043 (TLSLNSESTSSRHNSESESAPSS). The interval 1021–1045 (TLSLNSESTSSRHNSESESAPSSMF) is disordered. K1092 and K1095 each carry N6-acetyllysine. Disordered regions lie at residues 1101-1198 (SLTL…ENTS) and 1218-1247 (SFNTDTTTSGISSMSSSPSRETVAVDPTAM). The residue at position 1103 (T1103) is a Phosphothreonine. N6-acetyllysine is present on residues K1116, K1119, and K1125. Residue T1135 is modified to Phosphothreonine; by RPS6KB1. Position 1138 is a phosphoserine (S1138). The segment covering 1147–1158 (FTSSSAQKSLQL) has biased composition (polar residues). S1161, S1218, and S1234 each carry phosphoserine. Residues 1221–1239 (TDTTTSGISSMSSSPSRET) show a composition bias toward low complexity. Position 1270 is a phosphothreonine (T1270). Phosphoserine occurs at positions 1273, 1277, 1281, and 1283. The residue at position 1294 (T1294) is a Phosphothreonine. Phosphoserine is present on residues S1301 and S1312. T1331 carries the post-translational modification Phosphothreonine. Residues S1345 and S1352 each carry the phosphoserine modification. T1375 carries the post-translational modification Phosphothreonine. At S1384 the chain carries Phosphoserine. Position 1385 is a phosphotyrosine (Y1385). S1387, S1395, and S1410 each carry phosphoserine. Positions 1514, 1519, and 1522 each coordinate Zn(2+). 4 positions are modified to phosphoserine: S1570, S1573, S1576, and S1591. C1651 contacts Zn(2+).

Belongs to the RICTOR family. As to quaternary structure, component of the mechanistic target of rapamycin complex 2 (mTORC2), consisting in two heterotretramers composed of MTOR, MLST8, RICTOR and MAPKAP1/SIN1. The mTORC2 core complex associates with PRR5/PROTOR1 and/or PRR5L/PROTOR2. Contrary to mTORC1, mTORC2 does not bind to and is not sensitive to FKBP12-rapamycin. Binds directly to MTOR and PRR5 within the TORC2 complex; interaction with MTOR is enhanced by deubiquitination of RICTOR by USP9X. Interaction with MAPKAP1 is not enhanced by RICTOR deubiquitination by USP9X. Interacts with CCDC28B. Interacts with NBN. Interacts with SIK3. Interacts with NCKAP1L. Interacts with ARMH4 (via cytoplasmic tail); this interaction bridges ARMH4 to the mTORC2 complex and inhibits the mTORC2 kinase activity. Interacts with UBXN2A. Interacts with TSPAN8. Phosphorylated by MTOR; when part of mTORC2. Phosphorylated at Thr-1135 by RPS6KB1 downstream of the mTORC1 complex: phosphorylation of RICTOR inhibits mTORC2 signaling by creating a binding site for 14-3-3 proteins. Phosphorylated at Ser-1234 by GSK3B in response to endoplasmic stress, inhibiting mTORC2 signaling. In terms of processing, ubiquitinated by the SCF(FBXW7) complex, leading to its degradation by the proteasome. Deubiquitinated by USP9X; deubiquitination stabilizes RICTOR and enhances its binding to MTOR, thus promoting mTORC2 complex assembly. Post-translationally, acetylated by EP300/p300 in response to glucose, leading to activate the mTORC2 complex. Acetylation by BLOC1S1/GCN5L1 in response to hypotoxic stress protects RICTOR against ubiquitination and subsequent degradation by the proteasome. Highest levels in liver and brain with expression also detected in heart, muscle, spleen and kidney (at protein level).

It localises to the cell membrane. It is found in the endoplasmic reticulum membrane. The protein localises to the lysosome membrane. Functionally, component of the mechanistic target of rapamycin complex 2 (mTORC2), which transduces signals from growth factors to pathways involved in proliferation, cytoskeletal organization, lipogenesis and anabolic output. In response to growth factors, mTORC2 phosphorylates and activates AGC protein kinase family members, including AKT (AKT1, AKT2 and AKT3), PKC (PRKCA, PRKCB and PRKCE) and SGK1. In contrast to mTORC1, mTORC2 is nutrient-insensitive. Within the mTORC2 complex, RICTOR probably acts as a molecular adapter. RICTOR is responsible for the FKBP12-rapamycin-insensitivity of mTORC2. mTORC2 plays a critical role in AKT1 activation by mediating phosphorylation of different sites depending on the context, such as 'Thr-450', 'Ser-473', 'Ser-477' or 'Thr-479', facilitating the phosphorylation of the activation loop of AKT1 on 'Thr-308' by PDPK1/PDK1 which is a prerequisite for full activation. mTORC2 catalyzes the phosphorylation of SGK1 at 'Ser-422' and of PRKCA on 'Ser-657'. The mTORC2 complex also phosphorylates various proteins involved in insulin signaling, such as FBXW8 and IGF2BP1. mTORC2 acts upstream of Rho GTPases to regulate the actin cytoskeleton, probably by activating one or more Rho-type guanine nucleotide exchange factors. mTORC2 promotes the serum-induced formation of stress-fibers or F-actin. Plays an essential role in embryonic growth and development. The protein is Rapamycin-insensitive companion of mTOR of Mus musculus (Mouse).